The sequence spans 339 residues: Fructose-1,6-bisphosphatase class 1 (339 aa).

E92, D114, L116, and D117 together coordinate Mg(2+). Residues D117–S120, N209, and K275 each bind substrate. Position 281 (E281) interacts with Mg(2+).

Belongs to the FBPase class 1 family. As to quaternary structure, homotetramer. Requires Mg(2+) as cofactor.

The protein resides in the cytoplasm. It catalyses the reaction beta-D-fructose 1,6-bisphosphate + H2O = beta-D-fructose 6-phosphate + phosphate. The protein operates within carbohydrate biosynthesis; gluconeogenesis. The sequence is that of Fructose-1,6-bisphosphatase class 1 from Acidithiobacillus ferrooxidans (strain ATCC 53993 / BNL-5-31) (Leptospirillum ferrooxidans (ATCC 53993)).